The sequence spans 265 residues: Undecaprenyl-diphosphatase (265 aa).

8 helical membrane-spanning segments follow: residues 15-37 (GLTE…LLEY), 41-61 (KAES…VFLY), 85-105 (YLLA…HSFI), 109-129 (LFGP…ILAV), 144-164 (VSPA…WPGF), 183-203 (LAAE…TGYD), 218-238 (FWAV…KGFI), and 244-264 (VTFR…LLFW).

It belongs to the UppP family.

It localises to the cell inner membrane. The enzyme catalyses di-trans,octa-cis-undecaprenyl diphosphate + H2O = di-trans,octa-cis-undecaprenyl phosphate + phosphate + H(+). Its function is as follows. Catalyzes the dephosphorylation of undecaprenyl diphosphate (UPP). Confers resistance to bacitracin. The chain is Undecaprenyl-diphosphatase from Oleidesulfovibrio alaskensis (strain ATCC BAA-1058 / DSM 17464 / G20) (Desulfovibrio alaskensis).